Reading from the N-terminus, the 337-residue chain is MQDEGVDMKKLLLRSSDEVRVIAPSCSMRKIDSSVIERAQERFRCLGLNVAFGDHVYDEDFLGSASVDKRVADLHAAFADKKVKLILTAIGGFNSNQLLQHIDYALLKKNPKLLCGFSDVTALLNAIHAKTGMPVFYGPHFSTFGMEKGIEFTIECFKNTFFYGRCDILASETWSDDMWFKDQEHRQFITNPGYEIIHRGDMVGMGVGGNISTFNLLAGTEYEPSLKKSILFIEDTSRMSITDFDRHLEALTQRDDFCTVRGILIGRFQKDSGIDMDMLRKIISRKKALDAIPLFANVDFGHTTPHCILPIGGMIRVNVDRKCITVQLHSSVEQLPE.

S118 acts as the Nucleophile in catalysis. Active-site charge relay system residues include E234 and H302.

The protein belongs to the peptidase S66 family.

The sequence is that of Putative carboxypeptidase TP_0688 from Treponema pallidum (strain Nichols).